Consider the following 516-residue polypeptide: L-amino-acid oxidase (516 aa).

The signal sequence occupies residues 1-18; that stretch reads MNVFFMFSLLFLAALGSC. Residues C28 and C191 are joined by a disulfide bond. Residues 61 to 62, 81 to 82, R89, and 105 to 108 contribute to the FAD site; these read MS, EA, and GPMR. R108 contributes to the substrate binding site. N-linked (GlcNAc...) asparagine glycosylation is present at N190. Residue H241 participates in substrate binding. V279 contacts FAD. An intrachain disulfide couples C349 to C430. N379 carries an N-linked (GlcNAc...) asparagine glycan. Y390 contacts substrate. Residues E475, 481-486, and 482-487 contribute to the FAD site; these read HGWIDS and GWIDSS. Substrate contacts are provided by residues 481-482 and 482-483; these read HG and GW.

The protein belongs to the flavin monoamine oxidase family. FIG1 subfamily. In terms of assembly, homodimer; non-covalently linked. It depends on FAD as a cofactor. Post-translationally, N-glycosylated. Expressed by the venom gland.

The protein localises to the secreted. The catalysed reaction is an L-alpha-amino acid + O2 + H2O = a 2-oxocarboxylate + H2O2 + NH4(+). Catalyzes an oxidative deamination of predominantly hydrophobic and aromatic L-amino acids, thus producing hydrogen peroxide that may contribute to the diverse toxic effects of this enzyme. Exhibits diverse biological activities, such as hemorrhage, hemolysis, edema, apoptosis of vascular endothelial cells or tumor cell lines, antibacterial and antiparasitic activities, as well as regulation of platelet aggregation. Effects of snake L-amino oxidases on platelets are controversial, since they either induce aggregation or inhibit agonist-induced aggregation. These different effects are probably due to different experimental conditions. Displays dose-dependent inhibition on HIV-1 infection and replication. The polypeptide is L-amino-acid oxidase (Trimeresurus stejnegeri (Chinese green tree viper)).